The following is a 369-amino-acid chain: Pyruvate dehydrogenase E1 component subunit alpha (369 aa).

As to quaternary structure, heterodimer of an alpha and a beta chain. The cofactor is thiamine diphosphate.

The enzyme catalyses N(6)-[(R)-lipoyl]-L-lysyl-[protein] + pyruvate + H(+) = N(6)-[(R)-S(8)-acetyldihydrolipoyl]-L-lysyl-[protein] + CO2. The pyruvate dehydrogenase complex catalyzes the overall conversion of pyruvate to acetyl-CoA and CO(2). It contains multiple copies of three enzymatic components: pyruvate dehydrogenase (E1), dihydrolipoamide acetyltransferase (E2) and lipoamide dehydrogenase (E3). In Geobacillus stearothermophilus (Bacillus stearothermophilus), this protein is Pyruvate dehydrogenase E1 component subunit alpha (pdhA).